The following is a 539-amino-acid chain: Polyol transporter 5 (539 aa).

A compositionally biased stretch (polar residues) spans 1–11; sequence MTGATPENRTA. Residues 1–24 form a disordered region; the sequence is MTGATPENRTAPSPPPVKHVPESV. 12 consecutive transmembrane segments (helical) span residues 37-57, 73-93, 104-124, 127-147, 165-185, 196-216, 296-316, 333-353, 364-384, 391-411, 433-453, and 463-483; these read FACA…IGVM, LQIG…SCAA, YTIV…GLSP, AFLM…LMIA, SFPE…NLAF, LMLG…LAMP, IAAI…VVLF, LLAT…ATFL, LTSV…LTII, VMWA…TFSI, GSSM…ISFL, and GAFY…YTFL. Composition is skewed to basic and acidic residues over residues 503 to 514 and 530 to 539; these read WRDSKSKPKGNP and QWKEGDTQSS. Residues 503–539 are disordered; sequence WRDSKSKPKGNPEKTVPNPEVEIGSNKQWKEGDTQSS.

This sequence belongs to the major facilitator superfamily. Sugar transporter (TC 2.A.1.1) family. Highly expressed in roots. Expressed in vascular tissue of leaves, sepals and siliques.

It is found in the cell membrane. Plasma membrane broad-spectrum sugar-proton symporter. Mediates the uptake of linear polyols such as sorbitol, xylitol, erythritol or glycerol. Can transport the cyclic polyol myo-inositol and different hexoses, pentoses (including ribose), tetroses and sugar alcohols. The polypeptide is Polyol transporter 5 (PLT5) (Arabidopsis thaliana (Mouse-ear cress)).